A 130-amino-acid polypeptide reads, in one-letter code: Small ribosomal subunit protein uS9 (130 aa).

It belongs to the universal ribosomal protein uS9 family.

The polypeptide is Small ribosomal subunit protein uS9 (Geobacillus sp. (strain WCH70)).